A 352-amino-acid chain; its full sequence is Probable cytosolic iron-sulfur protein assembly protein CIAO1 homolog (352 aa).

7 WD repeats span residues 12–51, 58–97, 106–145, 151–190, 195–234, 245–284, and 303–352; these read ASNKRLWSLSWNHKGSVLISSGEDRVIKLWAKCNDQLWGS, AHKKSIRCVTWSPCGTYIASASFDGTVTIWKISEAHSAPE, GHTSEVKCVAWCPSGHLIATCGRDKSVWLWEFDDEEDVQC, PHSQDVKSVAWHPHGEVLVSTSYDNKINVYREELDDWTVF, GHDSTVWKAEFSPSGDILASCSDDLCVKLWSWEGVCGKSS, YHTRTIFDLNWSPDSQLLASCGSDNRLCIYKMPANGLTHI, and AHSE…EYEL.

The protein belongs to the WD repeat CIA1 family.

Functionally, essential component of the cytosolic iron-sulfur (Fe/S) protein assembly machinery. Required for the maturation of extramitochondrial Fe/S proteins. The sequence is that of Probable cytosolic iron-sulfur protein assembly protein CIAO1 homolog from Schistosoma japonicum (Blood fluke).